The sequence spans 62 residues: Photosystem II reaction center protein Z (62 aa).

2 helical membrane passes run 8–28 (AVFA…VVFA) and 41–61 (FSGT…NSLI).

Belongs to the PsbZ family. In terms of assembly, PSII is composed of 1 copy each of membrane proteins PsbA, PsbB, PsbC, PsbD, PsbE, PsbF, PsbH, PsbI, PsbJ, PsbK, PsbL, PsbM, PsbT, PsbY, PsbZ, Psb30/Ycf12, at least 3 peripheral proteins of the oxygen-evolving complex and a large number of cofactors. It forms dimeric complexes.

Its subcellular location is the plastid. It localises to the chloroplast thylakoid membrane. In terms of biological role, may control the interaction of photosystem II (PSII) cores with the light-harvesting antenna, regulates electron flow through the 2 photosystem reaction centers. PSII is a light-driven water plastoquinone oxidoreductase, using light energy to abstract electrons from H(2)O, generating a proton gradient subsequently used for ATP formation. The polypeptide is Photosystem II reaction center protein Z (Oenothera elata subsp. hookeri (Hooker's evening primrose)).